Reading from the N-terminus, the 296-residue chain is Deleted in azoospermia-like (296 aa).

A compositionally biased stretch (polar residues) spans 1–18 (MSAANPETPNSTISREAN). A disordered region spans residues 1–25 (MSAANPETPNSTISREANTQSSSAA). Positions 40–115 (NTVFVGGIDV…KKLKLGPAIR (76 aa)) constitute an RRM domain. The interval 80–132 (KGYGFVSFFNDVDVQKIVESQINFHGKKLKLGPAIRKQNLCAYHVQPRPLVFN) is homodimerization. Positions 167 to 190 (AYPPYPNSPVQVITGYQLPVYNYQ) constitute a DAZ domain. Phosphotyrosine is present on tyrosine 277.

Belongs to the RRM DAZ family. Homodimer and heterodimer. Forms a heterodimer with DAZ. Interacts with BOLL, DAZAP1 and DAZAP2. Interacts with PUM2 Multiple DAZL RRMs can bind to a single RNA containing multiple GUU triplets. As to expression, testis specific.

It localises to the cytoplasm. Its subcellular location is the nucleus. Functionally, RNA-binding protein, which is essential for gametogenesis in both males and females. Plays a central role during spermatogenesis. Acts by binding to the 3'-UTR of mRNA, specifically recognizing GUU triplets, and thereby regulating the translation of key transcripts. This chain is Deleted in azoospermia-like (DAZL), found in Callithrix jacchus (White-tufted-ear marmoset).